Reading from the N-terminus, the 66-residue chain is U1-theraphotoxin-Cg1a 1 (66 aa).

The N-terminal stretch at Met-1–Ala-21 is a signal peptide. A propeptide spanning residues Ala-22–Arg-29 is cleaved from the precursor. 3 disulfides stabilise this stretch: Cys-31/Cys-46, Cys-38/Cys-51, and Cys-45/Cys-58. Pro-63 is modified (proline amide).

The protein belongs to the neurotoxin 10 (Hwtx-1) family. 46 (Jztx-7/10/12) subfamily. In terms of tissue distribution, expressed by the venom gland.

The protein resides in the secreted. Probable ion channel inhibitor. This Chilobrachys guangxiensis (Chinese earth tiger tarantula) protein is U1-theraphotoxin-Cg1a 1.